A 1960-amino-acid polypeptide reads, in one-letter code: Zinc finger protein 638 (1960 aa).

The disordered stretch occupies residues 1–137 (MSRPRFNPRG…SPKVQSRYTK (137 aa)). Positions 19–31 (APNPPGMRPPGPF) are enriched in pro residues. Residues Arg47, Arg49, and Arg54 each carry the asymmetric dimethylarginine modification. Positions 60–75 (SYQNMGPQRMNVQVTQ) are enriched in polar residues. A compositionally biased stretch (basic and acidic residues) spans 76-89 (HRTDPRLTKEKLDF). The segment covering 117-137 (KQSSVTQVTEQSPKVQSRYTK) has biased composition (polar residues). Residues Ser128 and Ser288 each carry the phosphoserine modification. Lys291 participates in a covalent cross-link: Glycyl lysine isopeptide (Lys-Gly) (interchain with G-Cter in SUMO2). Residues Ser298, Ser367, Ser381, and Ser418 each carry the phosphoserine modification. The disordered stretch occupies residues 352–373 (KSVISSADAHGGPTESKKDYQS). Disordered stretches follow at residues 463 to 673 (NPEI…QSLS), 749 to 804 (PGKK…STVK), and 827 to 899 (KASI…KESE). Basic and acidic residues predominate over residues 468 to 483 (PSRRNESNRKENETPR). The tract at residues 470–573 (RRNESNRKEN…ERTSRKSVRS (104 aa)) is involved in localization to nuclear speckles. Positions 484 to 556 (RRSHSPSPRH…SRNLLRRSPK (73 aa)) are enriched in basic residues. A Phosphoserine modification is found at Ser554. 2 stretches are compositionally biased toward basic and acidic residues: residues 565-583 (RTSR…EDGG) and 591-602 (EVTKQKHTETVD). Phosphoserine is present on residues Ser606 and Ser615. Low complexity predominate over residues 618–628 (KPSAKSLSSVK). Ser637 bears the Phosphoserine mark. In terms of domain architecture, RRM 1 spans 676–751 (SILLVSELPE…KSVKVCVPGK (76 aa)). Residues 755–782 (QNKEMKKKPSDIKKSSASALKKETDASK) are compositionally biased toward basic and acidic residues. Residue Lys775 forms a Glycyl lysine isopeptide (Lys-Gly) (interchain with G-Cter in SUMO2) linkage. The segment covering 783 to 802 (TMETVSSSSSAKSGQIKSST) has biased composition (low complexity). 3 stretches are compositionally biased toward basic and acidic residues: residues 838–854 (KSLE…KDSN), 867–879 (ASSE…KSAE), and 888–899 (ATEKEPVNKESE). The 75-residue stretch at 902–976 (SVVFISNLPN…NQLSISMAPE (75 aa)) folds into the RRM 2 domain. Over residues 1082–1092 (SEVQRKNDLEL) the composition is skewed to basic and acidic residues. Disordered stretches follow at residues 1082 to 1151 (SEVQ…EEPK), 1396 to 1420 (TVVS…PKPV), 1442 to 1462 (TRSG…GVNR), 1484 to 1527 (TKQS…KSKE), and 1550 to 1583 (PSQA…KGKT). Ser1099 is modified (phosphoserine). A compositionally biased stretch (basic and acidic residues) spans 1140-1151 (VHQEELGKEEPK). Low complexity predominate over residues 1399–1409 (SSPKAKSTPSK). Ser1400 is subject to Phosphoserine. Over residues 1442 to 1459 (TRSGLAESNSKSKPTQIG) the composition is skewed to polar residues. Composition is skewed to basic and acidic residues over residues 1484–1503 (TKQS…DDSN) and 1518–1527 (TTDRSSKSKE). A phosphoserine mark is found at Ser1635 and Ser1661. 2 disordered regions span residues 1763–1898 (EVGD…SDVP) and 1930–1960 (KSTR…RSSR). Over residues 1772 to 1790 (NDSKVELARGKIEHHTDKK) the composition is skewed to basic and acidic residues. A Glycyl lysine isopeptide (Lys-Gly) (interchain with G-Cter in SUMO2) cross-link involves residue Lys1804. Residues 1806-1818 (DSFSQVGPGSETV) show a composition bias toward polar residues. Over residues 1819 to 1831 (TQKDLKTMPERHL) the composition is skewed to basic and acidic residues. Position 1864 is a phosphoserine (Ser1864). A compositionally biased stretch (basic and acidic residues) spans 1870 to 1885 (AELKDSEPDEKRRKTQ). The Matrin-type zinc-finger motif lies at 1876–1906 (EPDEKRRKTQDSSVGKSMTSDVPGDLDFLVP). Positions 1886–1895 (DSSVGKSMTS) are enriched in polar residues. A compositionally biased stretch (basic and acidic residues) spans 1936–1960 (QNTEKFMAKQRKEKEQNETEERSSR).

Interacts with FHL2. Interacts with CEBPA, CEBPD and CEBPG. Interacts with MPHOSPH8 and TASOR components of the HUSH complex; leading to recruitment of the HUSH complex. Interacts with SETDB1. Interacts with HDAC1. Interacts with HDAC4.

It localises to the nucleus speckle. In terms of biological role, transcription factor that binds to cytidine clusters in double-stranded DNA. Plays a key role in the silencing of unintegrated retroviral DNA: some part of the retroviral DNA formed immediately after infection remains unintegrated in the host genome and is transcriptionally repressed. Mediates transcriptional repression of unintegrated viral DNA by specifically binding to the cytidine clusters of retroviral DNA and mediating the recruitment of chromatin silencers, such as the HUSH complex, SETDB1 and the histone deacetylases HDAC1 and HDAC4. Acts as an early regulator of adipogenesis by acting as a transcription cofactor of CEBPs (CEBPA, CEBPD and/or CEBPG), controlling the expression of PPARG and probably of other proadipogenic genes, such as SREBF1. May also regulate alternative splicing of target genes during adipogenesis. The sequence is that of Zinc finger protein 638 from Mus musculus (Mouse).